The chain runs to 245 residues: Probable phosphatase YcdX (245 aa).

Zn(2+) is bound by residues His-7, His-9, His-15, His-40, Glu-73, His-101, His-131, Asp-192, and His-194.

The protein belongs to the PHP family. Homotrimer. The cofactor is Zn(2+).

The protein is Probable phosphatase YcdX of Shigella dysenteriae serotype 1 (strain Sd197).